Reading from the N-terminus, the 564-residue chain is Urocanate hydratase (564 aa).

Residues 58–59, Gln-136, 182–184, Glu-202, Arg-207, 248–249, 269–273, 279–280, and Tyr-328 contribute to the NAD(+) site; these read GG, GMG, NA, QTSAH, and YL. The active site involves Cys-416. Residue Gly-498 coordinates NAD(+).

The protein belongs to the urocanase family. NAD(+) serves as cofactor.

It is found in the cytoplasm. The catalysed reaction is 4-imidazolone-5-propanoate = trans-urocanate + H2O. It functions in the pathway amino-acid degradation; L-histidine degradation into L-glutamate; N-formimidoyl-L-glutamate from L-histidine: step 2/3. Catalyzes the conversion of urocanate to 4-imidazolone-5-propionate. The sequence is that of Urocanate hydratase from Aliivibrio salmonicida (strain LFI1238) (Vibrio salmonicida (strain LFI1238)).